Here is a 173-residue protein sequence, read N- to C-terminus: Myosin light chain 5 (173 aa).

Residues 1–22 (MASRKTKKKEGGGLRAQRASSN) form a disordered region. EF-hand domains are found at residues 30–65 (TQIQ…LGKT), 100–135 (DAEE…QADK), and 136–171 (MTAE…GEEK). Ca(2+) is bound by residues aspartate 43, asparagine 45, aspartate 47, and aspartate 54.

As to quaternary structure, myosin is a hexamer of 2 heavy chains and 4 light chains. In terms of tissue distribution, jaw-closing muscles.

In Felis catus (Cat), this protein is Myosin light chain 5 (MYL5).